A 314-amino-acid chain; its full sequence is R2-like ligand binding oxidase (314 aa).

Residues glutamate 68, glutamate 101, and histidine 104 each contribute to the Mn(2+) site. A cross-link (3-(O4'-tyrosyl)-valine (Val-Tyr)) is located at residues 71–162; sequence VTEDIQPFMS…AAQVRASVTY (92 aa). Glutamate 101 contributes to the Fe cation binding site. 3 residues coordinate Fe cation: glutamate 167, glutamate 202, and histidine 205.

The protein belongs to the ribonucleoside diphosphate reductase small chain family. R2-like ligand binding oxidase subfamily. Homodimer. It depends on Fe cation as a cofactor. The cofactor is Mn(2+).

Its function is as follows. Probable oxidase that might be involved in lipid metabolism. This chain is R2-like ligand binding oxidase, found in Mycobacterium tuberculosis (strain ATCC 25177 / H37Ra).